Reading from the N-terminus, the 239-residue chain is Mannose-P-dolichol utilization defect 1 protein homolog 1 (239 aa).

Helical transmembrane passes span 25–45, 62–82, 91–111, 123–143, 174–194, and 202–222; these read CLLP…SMTV, LSVV…AYCL, FGEL…IYYF, AILY…PFLF, LSFL…FTSI, and MLLG…QILL. In terms of domain architecture, PQ-loop 1 spans 27–93; it reads LPLISKLLGY…KDLPFSAFGE (67 aa). The PQ-loop 2 domain occupies 150-205; sequence KHLIFLSARIPQIWKNFRNKSTGQLSFLTCLMNFGGALARVFTSIQEKAPLSMLLG.

The protein belongs to the MPDU1 (TC 2.A.43.3) family.

It localises to the membrane. This is Mannose-P-dolichol utilization defect 1 protein homolog 1 from Arabidopsis thaliana (Mouse-ear cress).